The primary structure comprises 197 residues: Peptide deformylase (197 aa).

Fe cation contacts are provided by cysteine 106 and histidine 148. The active site involves glutamate 149. Histidine 152 contacts Fe cation.

This sequence belongs to the polypeptide deformylase family. The cofactor is Fe(2+).

It catalyses the reaction N-terminal N-formyl-L-methionyl-[peptide] + H2O = N-terminal L-methionyl-[peptide] + formate. Removes the formyl group from the N-terminal Met of newly synthesized proteins. Requires at least a dipeptide for an efficient rate of reaction. N-terminal L-methionine is a prerequisite for activity but the enzyme has broad specificity at other positions. This is Peptide deformylase from Mycobacterium bovis (strain ATCC BAA-935 / AF2122/97).